Consider the following 229-residue polypeptide: Ras-related protein Rab-33B (229 aa).

Residues asparagine 43, valine 44, glycine 45, lysine 46, threonine 47, cysteine 48, threonine 62, and threonine 65 each contribute to the GTP site. Threonine 47 contributes to the Mg(2+) binding site. The Switch 1 signature appears at 56–68 (GRFPDRTEATIGV). 2 residues coordinate Mg(2+): threonine 65 and aspartate 88. Positions 89 to 108 (TAGQERFRKSMVQHYYRNVH) match the Switch 2 motif. GTP contacts are provided by glycine 91, asparagine 148, lysine 149, aspartate 151, alanine 179, and lysine 180. 2 S-geranylgeranyl cysteine lipidation sites follow: cysteine 227 and cysteine 229. Cysteine 229 bears the Cysteine methyl ester mark.

Belongs to the small GTPase superfamily. Rab family. In terms of assembly, interacts (GTP- and GDP-bound forms) with ATG16L1; the complex consists of a tetramer where two RAB33B molecules bind independently one molecule of the ATG16L1 homodimer; the interaction promotes ATG12-ATG5-ATG16L1 complex recruitment to phagophores. Interacts with ATG16L2; however interaction is approximately hundred times lower than for ATG16L1. Interacts with RIC1 (via C-terminus domain); the interaction is direct with a preference for RAB33B-GTP. Interacts with RGP1. The cofactor is Mg(2+). In terms of processing, prenylated.

Its subcellular location is the golgi apparatus membrane. It is found in the golgi apparatus. It localises to the cis-Golgi network. The protein resides in the preautophagosomal structure membrane. It carries out the reaction GTP + H2O = GDP + phosphate + H(+). Regulated by guanine nucleotide exchange factors (GEFs) which promote the exchange of bound GDP for free GTP. Regulated by GTPase activating proteins (GAPs) such as SGSM2 which increase the GTP hydrolysis activity. Inhibited by GDP dissociation inhibitors (GDIs). The small GTPases Rab are key regulators of intracellular membrane trafficking, from the formation of transport vesicles to their fusion with membranes. Rabs cycle between an inactive GDP-bound form and an active GTP-bound form that is able to recruit to membranes different sets of downstream effectors directly responsible for vesicle formation, movement, tethering and fusion. RAB33B acts, in coordination with RAB6A, to regulate intra-Golgi retrograde trafficking. Participates in autophagosome formation by recruiting the ATG12-ATG5-ATG16L1 complex to phagophores, probably in a nucleotide-independent manner. In Homo sapiens (Human), this protein is Ras-related protein Rab-33B.